A 305-amino-acid chain; its full sequence is Dermonecrotic toxin LiSicTox-alphaII1 (305 aa).

The first 18 residues, 1–18 (MLLHIALILGCWSVFSEG), serve as a signal peptide directing secretion. A propeptide spanning residues 19 to 26 (AETDVAER) is cleaved from the precursor. Histidine 38 is an active-site residue. Mg(2+)-binding residues include glutamate 58 and aspartate 60. Catalysis depends on histidine 74, which acts as the Nucleophile. Intrachain disulfides connect cysteine 78–cysteine 84 and cysteine 80–cysteine 223. Residue aspartate 118 coordinates Mg(2+).

Belongs to the arthropod phospholipase D family. Class II subfamily. Class IIa sub-subfamily. The cofactor is Mg(2+). Expressed by the venom gland.

The protein localises to the secreted. The catalysed reaction is an N-(acyl)-sphingosylphosphocholine = an N-(acyl)-sphingosyl-1,3-cyclic phosphate + choline. It catalyses the reaction an N-(acyl)-sphingosylphosphoethanolamine = an N-(acyl)-sphingosyl-1,3-cyclic phosphate + ethanolamine. The enzyme catalyses a 1-acyl-sn-glycero-3-phosphocholine = a 1-acyl-sn-glycero-2,3-cyclic phosphate + choline. It carries out the reaction a 1-acyl-sn-glycero-3-phosphoethanolamine = a 1-acyl-sn-glycero-2,3-cyclic phosphate + ethanolamine. Its function is as follows. Dermonecrotic toxins cleave the phosphodiester linkage between the phosphate and headgroup of certain phospholipids (sphingolipid and lysolipid substrates), forming an alcohol (often choline) and a cyclic phosphate. This toxin acts on sphingomyelin (SM) wih high activity. It may also act on ceramide phosphoethanolamine (CPE), lysophosphatidylcholine (LPC) and lysophosphatidylethanolamine (LPE), but not on lysophosphatidylserine (LPS), and lysophosphatidylglycerol (LPG). It acts by transphosphatidylation, releasing exclusively cyclic phosphate products as second products. Shows high hemolytic activity. Causes dermonecrosis, induces inflammatory response, platelet aggregation and increases vessel permeability. Shows no lethality when injected at higher dose into mice. May cause complement-dependent hemolysis as well as in a complement-independent manner. The hemolysis provoked in a complement-independent manner may be composed of several steps. The toxin may bind to erythrocyte membranes, may hydrolyze membrane phospholipids (SM and LPC) thus generating metabolism products that may cause hemolysis, probably by provoking an increase of calcium inside cells. The calcium influx may be due to the opening of L-type calcium channels, since L-type calcium channel blockers inhibit calcium influx. In Loxosceles intermedia (Brown spider), this protein is Dermonecrotic toxin LiSicTox-alphaII1.